The following is a 1843-amino-acid chain: Nonribosomal peptide synthetase SIDD (1843 aa).

Residues 1-83 are disordered; it reads MLSIDDHGGG…QQQQQQQQRS (83 aa). The segment covering 65–81 has biased composition (low complexity); that stretch reads QQQQQQQQQQQQQQQQQ. An adenylation 1 region spans residues 133–528; that stretch reads TYSELEHLST…TEVEHHIQTC (396 aa). Residues 628-647 form a disordered region; it reads KLGATHADEGPQEEPETDAE. Residues 641–716 form the Carrier 1 domain; sequence EPETDAEKKL…AMANKSTSIS (76 aa). S677 is subject to O-(pantetheine 4'-phosphoryl)serine. A condensation 1 region spans residues 753–1175; the sequence is VEDVYPCTPL…ALSDDDAAAL (423 aa). A Carrier 2 domain is found at 1289–1365; the sequence is SATSQRQRRL…EMAAVMECTD (77 aa). Residue S1326 is modified to O-(pantetheine 4'-phosphoryl)serine. The condensation 2 stretch occupies residues 1447 to 1734; it reads FFDGPVDLRR…LREIAENCGL (288 aa).

Belongs to the NRP synthetase family. Requires pantetheine 4'-phosphate as cofactor.

The protein operates within siderophore biosynthesis. Nonribosomal peptide synthetase; part of the gene cluster that mediates the biosynthesis of at least 11 siderophores, including beauverichelin A, dimerumic acid (DA), Na-dimethyl coprogen (NADC), eleutherazine B, ferricrocin (FC), fusarinine A, fusarinine C (FsC), metachelin A, mevalonolactone, rhodotorulic acid (RA) and tenellin. This cocktail of siderophores for iron metabolism is essential for virulence, and more specifically for the fungal virulence in penetrating through the host cuticle. Siderophore synthesis is also involved in conidial germination under iron-deficient conditions. SIDC catalyzes the assembly of ferricrocin whereas SIDD catalyzes the assembly of fusarinine C. The chain is Nonribosomal peptide synthetase SIDD from Beauveria bassiana (strain ARSEF 2860) (White muscardine disease fungus).